Consider the following 361-residue polypeptide: Myb/SANT-like DNA-binding domain-containing protein 7 (361 aa).

The Myb-like domain occupies 11–70 (RWSRQETRTLLSILGEAEYIQRLQTVHHNADVYQAVSKRMQQEGFRRTERQCRSKFKVLK). Disordered regions lie at residues 174–198 (TSDL…SYSS) and 217–272 (RLGV…ARRR). Polar residues-rich tracts occupy residues 187–198 (AGCSQGTPSYSS) and 226–249 (PCTS…SSSR).

This chain is Myb/SANT-like DNA-binding domain-containing protein 7, found in Homo sapiens (Human).